An 865-amino-acid chain; its full sequence is Protein translocase subunit SecA (865 aa).

Residues glutamine 93, glycine 111–threonine 115, and aspartate 501 each bind ATP. 4 residues coordinate Zn(2+): cysteine 841, cysteine 843, cysteine 852, and cysteine 853.

The protein belongs to the SecA family. Monomer and homodimer. Part of the essential Sec protein translocation apparatus which comprises SecA, SecYEG and auxiliary proteins SecDF-YajC and YidC. Requires Zn(2+) as cofactor.

It localises to the cell inner membrane. It is found in the cytoplasm. The catalysed reaction is ATP + H2O + cellular proteinSide 1 = ADP + phosphate + cellular proteinSide 2.. In terms of biological role, part of the Sec protein translocase complex. Interacts with the SecYEG preprotein conducting channel. Has a central role in coupling the hydrolysis of ATP to the transfer of proteins into and across the cell membrane, serving as an ATP-driven molecular motor driving the stepwise translocation of polypeptide chains across the membrane. The chain is Protein translocase subunit SecA from Helicobacter pylori (strain G27).